Reading from the N-terminus, the 213-residue chain is MQILLAALVAYLIGSVSFAVVVSSVMGLADPRSYGSKNPGATNVLRSGNKKAAILTLVGDAFKGWIAVWLARHFGLPDVAIAWVAIAVFLGHLYPVFFRFQGGKGVATAAGVLLAVHPVLGLATALTWLIVAFFFRYSSLAALVAAVFAPVFDVFLFGMPGHNPIAWAVLAMSVLLVWRHRGNISKLLAGQESRIGDKKKAAADGGAQDGGKA.

The next 5 helical transmembrane spans lie at 3–23 (ILLA…VVVS), 51–71 (KAAI…VWLA), 78–98 (DVAI…PVFF), 115–135 (AVHP…AFFF), and 140–160 (LAAL…FGMP).

Belongs to the PlsY family. In terms of assembly, probably interacts with PlsX.

The protein resides in the cell inner membrane. It catalyses the reaction an acyl phosphate + sn-glycerol 3-phosphate = a 1-acyl-sn-glycero-3-phosphate + phosphate. It participates in lipid metabolism; phospholipid metabolism. Catalyzes the transfer of an acyl group from acyl-phosphate (acyl-PO(4)) to glycerol-3-phosphate (G3P) to form lysophosphatidic acid (LPA). This enzyme utilizes acyl-phosphate as fatty acyl donor, but not acyl-CoA or acyl-ACP. This Burkholderia cenocepacia (strain HI2424) protein is Glycerol-3-phosphate acyltransferase.